Here is a 112-residue protein sequence, read N- to C-terminus: Urease subunit beta (112 aa).

It belongs to the urease beta subunit family. Heterotrimer of UreA (gamma), UreB (beta) and UreC (alpha) subunits. Three heterotrimers associate to form the active enzyme.

Its subcellular location is the cytoplasm. It catalyses the reaction urea + 2 H2O + H(+) = hydrogencarbonate + 2 NH4(+). Its pathway is nitrogen metabolism; urea degradation; CO(2) and NH(3) from urea (urease route): step 1/1. This chain is Urease subunit beta, found in Polaromonas sp. (strain JS666 / ATCC BAA-500).